The chain runs to 360 residues: Phospho-N-acetylmuramoyl-pentapeptide-transferase (360 aa).

10 helical membrane-spanning segments follow: residues R25 to I45, T73 to L93, Y97 to Y117, L128 to L148, V168 to S188, G199 to S219, T236 to F256, L262 to I282, L288 to V308, and V338 to K358.

It belongs to the glycosyltransferase 4 family. MraY subfamily. Requires Mg(2+) as cofactor.

Its subcellular location is the cell inner membrane. It carries out the reaction UDP-N-acetyl-alpha-D-muramoyl-L-alanyl-gamma-D-glutamyl-meso-2,6-diaminopimeloyl-D-alanyl-D-alanine + di-trans,octa-cis-undecaprenyl phosphate = di-trans,octa-cis-undecaprenyl diphospho-N-acetyl-alpha-D-muramoyl-L-alanyl-D-glutamyl-meso-2,6-diaminopimeloyl-D-alanyl-D-alanine + UMP. It functions in the pathway cell wall biogenesis; peptidoglycan biosynthesis. Functionally, catalyzes the initial step of the lipid cycle reactions in the biosynthesis of the cell wall peptidoglycan: transfers peptidoglycan precursor phospho-MurNAc-pentapeptide from UDP-MurNAc-pentapeptide onto the lipid carrier undecaprenyl phosphate, yielding undecaprenyl-pyrophosphoryl-MurNAc-pentapeptide, known as lipid I. The polypeptide is Phospho-N-acetylmuramoyl-pentapeptide-transferase (Idiomarina loihiensis (strain ATCC BAA-735 / DSM 15497 / L2-TR)).